Here is a 474-residue protein sequence, read N- to C-terminus: MTTPQEVLKRIQDEKIELIDLKFIDTVGTWQHLTLYQNQIDESSFSDGVPFDGSSIRGWKAINESDMTMVLDPNTAWIDPFMEVPTLSIVCSIKEPRTGEWYNRCPRVIAQKAIDYLVSTGIGDTAFFGPEAEFFIFDSARFAQNANEGYYFLDSVEGAWNSGKEGTADKPNLAYKPRFKEGYFPVSPTDSFQDIRTEMLLTMAKLGVPIEKHHHEVATGGQCELGFRFGKLIEAADWLMIYKYVIKNVAKKYGKTVTFMPKPIFGDNGSGMHCHQSIWKDGKPLFAGDQYAGLSEMGLYYIGGLLKHAPALLAITNPSTNSYKRLVPGYEAPVNLAYSQGNRSASIRIPLSGTNPKAKRLEFRCPDATSNPYLAFAAMLCAGIDGIKNKIHPGEPLDKNIYELSPEELAKVPSTPGSLELALEALENDHAFLTDTGVFTEDFIQNWIDYKLANEVKQMQLRPHPYEFSIYYDV.

Residues 14-99 form the GS beta-grasp domain; the sequence is EKIELIDLKF…VCSIKEPRTG (86 aa). In terms of domain architecture, GS catalytic spans 106-474; that stretch reads PRVIAQKAID…PYEFSIYYDV (369 aa). 2 residues coordinate Mg(2+): glutamate 131 and glutamate 133. An ATP-binding site is contributed by glutamate 211. Mg(2+) contacts are provided by glutamate 216 and glutamate 224. L-glutamate contacts are provided by residues 268-269 and glycine 269; that span reads NG. Histidine 273 contributes to the Mg(2+) binding site. ATP contacts are provided by residues 275–277 and serine 277; that span reads HQS. L-glutamate contacts are provided by arginine 325, glutamate 331, and arginine 343. ATP-binding residues include arginine 343, arginine 348, and lysine 357. Glutamate 362 serves as a coordination point for Mg(2+). Position 364 (arginine 364) interacts with L-glutamate. The residue at position 402 (tyrosine 402) is an O-AMP-tyrosine.

Belongs to the glutamine synthetase family. As to quaternary structure, oligomer of 12 subunits arranged in the form of two hexagons. Mg(2+) serves as cofactor.

The protein resides in the cytoplasm. The catalysed reaction is L-glutamate + NH4(+) + ATP = L-glutamine + ADP + phosphate + H(+). Its activity is regulated as follows. The activity of this enzyme could be controlled by adenylation under conditions of abundant glutamine. Its function is as follows. Involved in nitrogen metabolism via ammonium assimilation. Catalyzes the ATP-dependent biosynthesis of glutamine from glutamate and ammonia. This is Glutamine synthetase from Nostoc sp. (strain PCC 7120 / SAG 25.82 / UTEX 2576).